A 156-amino-acid polypeptide reads, in one-letter code: MPRRREVAKRVILPDPKYGDRVVAKLVNIIMLDGKKSTAEKALYGALELASEKVNEDPVKILKKSLDNIKPMLEVKSRRVGGSTYQVPVEVRAERRVSLAMRWLVKYANDRSEKTVTDKLAGEILDAYNNRGAAVKKREDTHKMAEANRAFAHYRW.

The protein belongs to the universal ribosomal protein uS7 family. Part of the 30S ribosomal subunit. Contacts proteins S9 and S11.

Functionally, one of the primary rRNA binding proteins, it binds directly to 16S rRNA where it nucleates assembly of the head domain of the 30S subunit. Is located at the subunit interface close to the decoding center, probably blocks exit of the E-site tRNA. In Geotalea uraniireducens (strain Rf4) (Geobacter uraniireducens), this protein is Small ribosomal subunit protein uS7.